The chain runs to 323 residues: DNA repair and recombination protein RadA (323 aa).

115–122 (GEFGSGKT) is a binding site for ATP.

This sequence belongs to the eukaryotic RecA-like protein family.

In terms of biological role, involved in DNA repair and in homologous recombination. Binds and assemble on single-stranded DNA to form a nucleoprotein filament. Hydrolyzes ATP in a ssDNA-dependent manner and promotes DNA strand exchange between homologous DNA molecules. This Thermoplasma volcanium (strain ATCC 51530 / DSM 4299 / JCM 9571 / NBRC 15438 / GSS1) protein is DNA repair and recombination protein RadA.